We begin with the raw amino-acid sequence, 3707 residues long: uncharacterized protein (3707 aa).

The next 6 helical transmembrane spans lie at 117 to 137 (IFTG…ATFL), 152 to 172 (AAAL…LFGL), 174 to 194 (FIVV…FLLL), 222 to 242 (IFGF…PFLS), 269 to 289 (FSYL…ICWF), and 318 to 338 (HLFF…YFGI). Disordered stretches follow at residues 3139–3164 (FSVR…YKKT) and 3583–3612 (GREE…GQFP). A compositionally biased stretch (basic residues) spans 3140–3149 (SVRKRKKRGN).

The protein belongs to the ycf78 family.

Its subcellular location is the plastid. The protein resides in the chloroplast membrane. This is an uncharacterized protein from Stigeoclonium helveticum (Green alga).